The chain runs to 335 residues: MNDFKKVSESLETALRNEFDFRFATEVSLKEISRWRIGGPAAVFAEPSSINEICALLAFMKNRPEPVVVVGGTSNILFDSDGFGGLVIKLGENFSNFIIEGSRIRAQAGASVPQLVRAVATEGLEGIVHAGGIPGTVGGLVVMNGGTQRRGIGEHVTKVLVTDAEGSIRELNANELQFTYRNSVLKNSETTVLEVELLLKPGNAGELLAELETILDQRSQKFPEDLPNCGSTFLSDPAMYSIVGPPGKAIEDAGLKGLRRGSAEISMQHANFIVNHGDASDDDILWLISAVRKEVYSRTGFVMDCEVLYLSYSGDFRPAHEVADEQWPDIDLVRN.

In terms of domain architecture, FAD-binding PCMH-type spans 36–202 (RIGGPAAVFA…LEVELLLKPG (167 aa)). Arg-181 is a catalytic residue. The active-site Proton donor is the Ser-231. Glu-306 is an active-site residue.

The protein belongs to the MurB family. FAD is required as a cofactor.

The protein localises to the cytoplasm. The catalysed reaction is UDP-N-acetyl-alpha-D-muramate + NADP(+) = UDP-N-acetyl-3-O-(1-carboxyvinyl)-alpha-D-glucosamine + NADPH + H(+). Its pathway is cell wall biogenesis; peptidoglycan biosynthesis. In terms of biological role, cell wall formation. The polypeptide is UDP-N-acetylenolpyruvoylglucosamine reductase 1 (murB1) (Corynebacterium glutamicum (strain ATCC 13032 / DSM 20300 / JCM 1318 / BCRC 11384 / CCUG 27702 / LMG 3730 / NBRC 12168 / NCIMB 10025 / NRRL B-2784 / 534)).